The chain runs to 474 residues: Bifunctional protein HldE (474 aa).

The ribokinase stretch occupies residues 1-318 (MKLSMPRFDQ…RAVQREQGSE (318 aa)). 194 to 197 (NLSE) is an ATP binding site. Asp263 is a catalytic residue. Residues 343–474 (FTNGCFDILH…AIVEKIRQKG (132 aa)) form a cytidylyltransferase region.

The protein in the N-terminal section; belongs to the carbohydrate kinase PfkB family. This sequence in the C-terminal section; belongs to the cytidylyltransferase family. Homodimer.

It catalyses the reaction D-glycero-beta-D-manno-heptose 7-phosphate + ATP = D-glycero-beta-D-manno-heptose 1,7-bisphosphate + ADP + H(+). The enzyme catalyses D-glycero-beta-D-manno-heptose 1-phosphate + ATP + H(+) = ADP-D-glycero-beta-D-manno-heptose + diphosphate. Its pathway is nucleotide-sugar biosynthesis; ADP-L-glycero-beta-D-manno-heptose biosynthesis; ADP-L-glycero-beta-D-manno-heptose from D-glycero-beta-D-manno-heptose 7-phosphate: step 1/4. It participates in nucleotide-sugar biosynthesis; ADP-L-glycero-beta-D-manno-heptose biosynthesis; ADP-L-glycero-beta-D-manno-heptose from D-glycero-beta-D-manno-heptose 7-phosphate: step 3/4. Functionally, catalyzes the phosphorylation of D-glycero-D-manno-heptose 7-phosphate at the C-1 position to selectively form D-glycero-beta-D-manno-heptose-1,7-bisphosphate. In terms of biological role, catalyzes the ADP transfer from ATP to D-glycero-beta-D-manno-heptose 1-phosphate, yielding ADP-D-glycero-beta-D-manno-heptose. The polypeptide is Bifunctional protein HldE (Pseudomonas aeruginosa (strain UCBPP-PA14)).